The following is a 536-amino-acid chain: Zinc finger protein 394 (536 aa).

Positions 18 to 45 (AVKVEEDSPGSQEPSGSGDWQNPETSRK) are disordered. Residue K20 forms a Glycyl lysine isopeptide (Lys-Gly) (interchain with G-Cter in SUMO2) linkage. The segment covering 26-41 (PGSQEPSGSGDWQNPE) has biased composition (polar residues). The region spanning 44–126 (RKQFRQLRYQ…ALARTLQRAL (83 aa)) is the SCAN box domain. A KRAB domain is found at 135-196 (ATFKDVAESL…KQEMSKEAES (62 aa)). Residues K207 and K260 each participate in a glycyl lysine isopeptide (Lys-Gly) (interchain with G-Cter in SUMO2) cross-link. 3 C2H2-type zinc fingers span residues 328–350 (YKCDNCEKRFRQRSDLFKHQRTH), 356–378 (YQCQECGKSFSQSAALVKHQRTH), and 384–406 (YACPECGECFRQSSHLSRHQRTH). The segment at 412 to 433 (CKCEECGEIFHISSLFKHQRLH) adopts a C2H2-type 4; atypical zinc-finger fold. K413 is covalently cross-linked (Glycyl lysine isopeptide (Lys-Gly) (interchain with G-Cter in SUMO2)). 3 consecutive C2H2-type zinc fingers follow at residues 439–461 (HKCEVCEKSFKQRSDLFKHQRIH), 467–489 (YMCFVCERRFSQSATLIKHQRTH), and 495–517 (YKCFQCGERFRQSTHLVRHQRIH).

The protein belongs to the krueppel C2H2-type zinc-finger protein family.

It localises to the nucleus. In terms of biological role, may be involved in transcriptional regulation. The sequence is that of Zinc finger protein 394 (Znf394) from Rattus norvegicus (Rat).